The chain runs to 124 residues: Small ribosomal subunit protein bS16 (124 aa).

Residues 80–124 form a disordered region; sequence AGLAKRPARNNPTKAQPGKKAQERAAEAKQKAEEAAAAASEAAAE. The segment covering 99–113 has biased composition (basic and acidic residues); it reads KAQERAAEAKQKAEE. A compositionally biased stretch (low complexity) spans 114–124; it reads AAAAASEAAAE.

The protein belongs to the bacterial ribosomal protein bS16 family.

This chain is Small ribosomal subunit protein bS16, found in Rhizobium meliloti (strain 1021) (Ensifer meliloti).